The primary structure comprises 388 residues: Succinate--CoA ligase [ADP-forming] subunit beta (388 aa).

An ATP-grasp domain is found at 9-244; it reads KQLFAEYGLP…PSQDDPREAH (236 aa). Residues Lys46, 53-55, Glu99, Thr102, and Glu107 contribute to the ATP site; that span reads GRG. Residues Asn199 and Asp213 each coordinate Mg(2+). Residues Asn264 and 321 to 323 each bind substrate; that span reads GIV.

The protein belongs to the succinate/malate CoA ligase beta subunit family. As to quaternary structure, heterotetramer of two alpha and two beta subunits. The cofactor is Mg(2+).

It catalyses the reaction succinate + ATP + CoA = succinyl-CoA + ADP + phosphate. The enzyme catalyses GTP + succinate + CoA = succinyl-CoA + GDP + phosphate. Its pathway is carbohydrate metabolism; tricarboxylic acid cycle; succinate from succinyl-CoA (ligase route): step 1/1. In terms of biological role, succinyl-CoA synthetase functions in the citric acid cycle (TCA), coupling the hydrolysis of succinyl-CoA to the synthesis of either ATP or GTP and thus represents the only step of substrate-level phosphorylation in the TCA. The beta subunit provides nucleotide specificity of the enzyme and binds the substrate succinate, while the binding sites for coenzyme A and phosphate are found in the alpha subunit. In Pseudomonas fluorescens (strain ATCC BAA-477 / NRRL B-23932 / Pf-5), this protein is Succinate--CoA ligase [ADP-forming] subunit beta.